Reading from the N-terminus, the 424-residue chain is Hemagglutinin-esterase (424 aa).

Residues 1 to 16 (MFLLPRFVLVSCIIGS) form the signal peptide. The segment at 7–127 (FVLVSCIIGS…SNDIWMQNKG (121 aa)) is esterase domain 1. The Virion surface segment spans residues 17–392 (LGFDNPPTNV…PICVYDPLPL (376 aa)). The Nucleophile role is filled by Ser-40. A disulfide bond links Cys-44 and Cys-65. N-linked (GlcNAc...) asparagine; by host glycans are attached at residues Asn-54, Asn-89, Asn-153, Asn-236, and Asn-301. Intrachain disulfides connect Cys-113/Cys-162, Cys-197/Cys-276, and Cys-205/Cys-249. The receptor binding stretch occupies residues 128-266 (LFYTQVYKNM…GNYLAISNEL (139 aa)). Positions 267–379 (LLTVPTKAIC…RCPTAADINN (113 aa)) are esterase domain 2. A disulfide bridge links Cys-307 with Cys-312. Asn-316 is a glycosylation site (N-linked (GlcNAc...) asparagine; by host). Active-site charge relay system residues include Asp-326 and His-329. Cysteines 347 and 371 form a disulfide. A glycan (N-linked (GlcNAc...) asparagine; by host) is linked at Asn-358. The chain crosses the membrane as a helical span at residues 393-413 (ILLGILLGVAVIIIVVLLLYF). Residues 414–424 (MVDNGTRLHDA) lie on the Intravirion side of the membrane. The N-linked (GlcNAc...) asparagine; by host glycan is linked to Asn-417.

This sequence belongs to the influenza type C/coronaviruses hemagglutinin-esterase family. As to quaternary structure, homodimer; disulfide-linked. Forms a complex with the M protein in the pre-Golgi. Associates then with S-M complex to form a ternary complex S-M-HE. N-glycosylated in the host RER.

It localises to the virion membrane. The protein resides in the host cell membrane. It catalyses the reaction N-acetyl-9-O-acetylneuraminate + H2O = N-acetylneuraminate + acetate + H(+). It carries out the reaction N-acetyl-4-O-acetylneuraminate + H2O = N-acetylneuraminate + acetate + H(+). Its function is as follows. Structural protein that makes short spikes at the surface of the virus. Contains receptor binding and receptor-destroying activities. Mediates de-O-acetylation of N-acetyl-4-O-acetylneuraminic acid, which is probably the receptor determinant recognized by the virus on the surface of erythrocytes and susceptible cells. This receptor-destroying activity is important for virus release as it probably helps preventing self-aggregation and ensures the efficient spread of the progeny virus from cell to cell. May serve as a secondary viral attachment protein for initiating infection, the spike protein being the major one. May become a target for both the humoral and the cellular branches of the immune system. This Bovine coronavirus (strain LY-138) (BCoV) protein is Hemagglutinin-esterase.